The chain runs to 107 residues: Basic phospholipase A2 sphenotoxin subunit B (107 aa).

Ca(2+) contacts are provided by tyrosine 27, glycine 29, and glycine 31. 5 cysteine pairs are disulfide-bonded: cysteine 28–cysteine 44, cysteine 43–cysteine 91, cysteine 50–cysteine 88, cysteine 57–cysteine 81, and cysteine 75–cysteine 86. Residue histidine 47 is part of the active site. Aspartate 48 lines the Ca(2+) pocket. The active site involves aspartate 89.

This sequence belongs to the phospholipase A2 family. Group II subfamily. D49 sub-subfamily. In terms of assembly, heterodimer of A and B chains; non-covalently linked. The acidic protein (B chain) has phospholipase A2 activity and the A chain weakly inhibits the B chain enzymatic activity but potentiates its lethal potency. Expressed by the venom gland.

It is found in the secreted. It carries out the reaction a 1,2-diacyl-sn-glycero-3-phosphocholine + H2O = a 1-acyl-sn-glycero-3-phosphocholine + a fatty acid + H(+). Heterodimer A-B: Sphenotoxin is a potent neurotoxin that possesses phospholipase A2 (PLA2) activity. It consists of a non-covalent association of a basic PLA2 subunit B with a non-enzymatic subunit A. In terms of biological role, monomer B: Not found in vivo. In vitro, potent neurotoxin that possesses phospholipase A2 (PLA2) activity and exerts a lethal action by blocking neuromuscular transmission. Induces paralysis of the hind legs and neuromuscular blockade in mouse phrenic nerve-diaphragm preparations. PLA2 catalyzes the calcium-dependent hydrolysis of the 2-acyl groups in 3-sn-phosphoglycerides. The sequence is that of Basic phospholipase A2 sphenotoxin subunit B from Ophryacus sphenophrys (Broad-horned pitviper).